Reading from the N-terminus, the 2139-residue chain is U5 small nuclear ribonucleoprotein 200 kDa helicase (2139 aa).

2 positions are modified to phosphoserine: Ser17 and Ser26. Residues Glu39–Asp80 are disordered. Lys46 participates in a covalent cross-link: Glycyl lysine isopeptide (Lys-Gly) (interchain with G-Cter in SUMO2). Positions Glu48–Asp80 are enriched in basic and acidic residues. Residues Asp54–Met84 adopt a coiled-coil conformation. The residue at position 225 (Ser225) is a Phosphoserine. At Thr389 the chain carries Phosphothreonine. The segment at Asp395 to Ala2132 is interaction with C9orf78 and WBP4. The 184-residue stretch at Arg490–Leu673 folds into the Helicase ATP-binding 1 domain. Ala503 to Thr510 provides a ligand contact to ATP. The DEAH box signature appears at Asp615–His618. Residues Pro684–Gly921 form the Helicase C-terminal 1 domain. Position 709 is a phosphotyrosine (Tyr709). Lys944 is covalently cross-linked (Glycyl lysine isopeptide (Lys-Gly) (interchain with G-Cter in SUMO)). Lys971 carries the N6-acetyllysine; alternate modification. Lys971 participates in a covalent cross-link: Glycyl lysine isopeptide (Lys-Gly) (interchain with G-Cter in SUMO); alternate. An SEC63 1 domain is found at Thr982–Phe1289. Residues Lys1071 and Lys1199 each participate in a glycyl lysine isopeptide (Lys-Gly) (interchain with G-Cter in SUMO) cross-link. Residues Leu1285–Asp2139 are interaction with TSSC4. The region spanning Asn1340–Phe1515 is the Helicase ATP-binding 2 domain. Ala1353 to Thr1360 lines the ATP pocket. At Thr1431 the chain carries Phosphothreonine. Residues Asp1457–His1460 carry the DEAH box motif. Positions Pro1548–Asp1756 constitute a Helicase C-terminal 2 domain. The residue at position 1768 (Thr1768) is a Phosphothreonine. Positions Pro1815–Val2127 constitute an SEC63 2 domain. Ser2005 is modified (phosphoserine). Lys2094 participates in a covalent cross-link: Glycyl lysine isopeptide (Lys-Gly) (interchain with G-Cter in SUMO). Thr2134 carries the post-translational modification Phosphothreonine. Ser2136 and Ser2138 each carry phosphoserine.

Belongs to the helicase family. SKI2 subfamily. In terms of assembly, component of a core complex containing at least PRPF8, SNRNP200, EFTUD2 and SNRNP40. Component of the U5 snRNP and U4/U6-U5 tri-snRNP complexes, building blocks of the spliceosome. Component of the U4/U6-U5 tri-snRNP complex composed of the U4, U6 and U5 snRNAs and at least PRPF3, PRPF4, PRPF6, PRPF8, PRPF31, SNRNP200, TXNL4A, SNRNP40, DDX23, CD2BP2, PPIH, SNU13, EFTUD2, SART1 and USP39. Component of precatalytic, catalytic and postcatalytic spliceosomal complexes. Component of the minor spliceosome, which splices U12-type introns. Interacts with C9orf78; the interaction is direct and mutually exclusive with its interaction with WBP4. Interacts with WBP4; the interaction is mutually exclusive with its interaction with C9orf78. Interacts with PRPF8. Interacts with TSSC4; the interaction is direct, excludes recruitment of C9ORF78 and WBP4 to SNRNP200 and negatively regulates its RNA helicase activity.

It localises to the nucleus. It carries out the reaction ATP + H2O = ADP + phosphate + H(+). Catalyzes the ATP-dependent unwinding of U4/U6 RNA duplices, an essential step in the assembly of a catalytically active spliceosome. Plays a role in pre-mRNA splicing as core component of precatalytic, catalytic and postcatalytic spliceosomal complexes. As a component of the minor spliceosome, involved in the splicing of U12-type introns in pre-mRNAs. Involved in spliceosome assembly, activation and disassembly. Mediates changes in the dynamic network of RNA-RNA interactions in the spliceosome. This is U5 small nuclear ribonucleoprotein 200 kDa helicase (Snrnp200) from Rattus norvegicus (Rat).